The following is a 416-amino-acid chain: Glutamyl-tRNA reductase (416 aa).

Residues 49–52, Ser105, 110–112, and Gln116 each bind substrate; these read TCNR and EPQ. The Nucleophile role is filled by Cys50. 185-190 is a binding site for NADP(+); the sequence is GAGETI.

It belongs to the glutamyl-tRNA reductase family. Homodimer.

It carries out the reaction (S)-4-amino-5-oxopentanoate + tRNA(Glu) + NADP(+) = L-glutamyl-tRNA(Glu) + NADPH + H(+). Its pathway is porphyrin-containing compound metabolism; protoporphyrin-IX biosynthesis; 5-aminolevulinate from L-glutamyl-tRNA(Glu): step 1/2. Its function is as follows. Catalyzes the NADPH-dependent reduction of glutamyl-tRNA(Glu) to glutamate 1-semialdehyde (GSA). This Shewanella oneidensis (strain ATCC 700550 / JCM 31522 / CIP 106686 / LMG 19005 / NCIMB 14063 / MR-1) protein is Glutamyl-tRNA reductase.